We begin with the raw amino-acid sequence, 304 residues long: Acetyl-coenzyme A carboxylase carboxyl transferase subunit beta (304 aa).

The CoA carboxyltransferase N-terminal domain maps to 23 to 292 (VWTKCDSCGQ…PNPEAPREGV (270 aa)). Zn(2+)-binding residues include cysteine 27, cysteine 30, cysteine 46, and cysteine 49. Residues 27-49 (CDSCGQVLYRAELERNLEVCPKC) form a C4-type zinc finger. A disordered region spans residues 285 to 304 (PEAPREGVVVPPVPDQEPEA). The span at 295–304 (PPVPDQEPEA) shows a compositional bias: pro residues.

It belongs to the AccD/PCCB family. In terms of assembly, acetyl-CoA carboxylase is a heterohexamer composed of biotin carboxyl carrier protein (AccB), biotin carboxylase (AccC) and two subunits each of ACCase subunit alpha (AccA) and ACCase subunit beta (AccD). Zn(2+) is required as a cofactor.

Its subcellular location is the cytoplasm. It carries out the reaction N(6)-carboxybiotinyl-L-lysyl-[protein] + acetyl-CoA = N(6)-biotinyl-L-lysyl-[protein] + malonyl-CoA. It functions in the pathway lipid metabolism; malonyl-CoA biosynthesis; malonyl-CoA from acetyl-CoA: step 1/1. Its function is as follows. Component of the acetyl coenzyme A carboxylase (ACC) complex. Biotin carboxylase (BC) catalyzes the carboxylation of biotin on its carrier protein (BCCP) and then the CO(2) group is transferred by the transcarboxylase to acetyl-CoA to form malonyl-CoA. This is Acetyl-coenzyme A carboxylase carboxyl transferase subunit beta from Shigella sonnei (strain Ss046).